The chain runs to 163 residues: uncharacterized protein (163 aa).

4 helical membrane passes run 19–39, 63–83, 87–107, and 119–139; these read GPPS…SEGI, FFAD…LLGL, VAAV…KLRA, and FWGM…LIFL.

Belongs to the DoxX family.

The protein resides in the cell membrane. This is an uncharacterized protein from Mycobacterium tuberculosis (strain ATCC 25618 / H37Rv).